We begin with the raw amino-acid sequence, 469 residues long: Probable monogalactosyldiacylglycerol synthase 2, chloroplastic (469 aa).

Residues 1–42 constitute a chloroplast transit peptide; sequence MVISVATPRRSIRDAVLGGVLGAGGRQLYQPLRCAFYDGAAG.

It belongs to the glycosyltransferase 28 family.

It is found in the plastid. Its subcellular location is the chloroplast membrane. It catalyses the reaction a 1,2-diacyl-sn-glycerol + UDP-alpha-D-galactose = a 1,2-diacyl-3-O-(beta-D-galactosyl)-sn-glycerol + UDP + H(+). Functionally, involved in the synthesis of the major structural component of photosynthetic membranes. The sequence is that of Probable monogalactosyldiacylglycerol synthase 2, chloroplastic (MGD2) from Oryza sativa subsp. indica (Rice).